The following is a 788-amino-acid chain: Integrin beta-6 (788 aa).

The signal sequence occupies residues 1–21; it reads MGIELLCFFFLFLGRDDHVRG. Residues 22 to 71 enclose the PSI domain; the sequence is GCAMEGAETCGDCLLIGPQCAWCSQENFTHPSGVSERCDTPANLLAKGCQ. Topologically, residues 22-709 are extracellular; the sequence is GCAMEGAETC…KDCPKPPNIP (688 aa). 19 cysteine pairs are disulfide-bonded: cysteine 23/cysteine 41, cysteine 31/cysteine 454, cysteine 34/cysteine 59, cysteine 44/cysteine 70, cysteine 197/cysteine 204, cysteine 252/cysteine 293, cysteine 394/cysteine 406, cysteine 426/cysteine 452, cysteine 456/cysteine 476, cysteine 467/cysteine 479, cysteine 481/cysteine 490, cysteine 492/cysteine 519, cysteine 502/cysteine 517, cysteine 511/cysteine 522, cysteine 524/cysteine 537, cysteine 539/cysteine 560, cysteine 544/cysteine 558, cysteine 552/cysteine 563, and cysteine 565/cysteine 574. Residues asparagine 48 and asparagine 97 are each glycosylated (N-linked (GlcNAc...) asparagine). In terms of domain architecture, VWFA spans 131–371; it reads YPVDLYYLMD…QLIISAYEEL (241 aa). 3 residues coordinate Mg(2+): aspartate 140, serine 142, and serine 144. Ca(2+) contacts are provided by serine 144, aspartate 147, aspartate 148, and glutamate 179. 4 residues coordinate Ca(2+): asparagine 235, aspartate 237, proline 239, and glutamate 240. Glutamate 240 serves as a coordination point for Mg(2+). Asparagine 260 carries N-linked (GlcNAc...) asparagine glycosylation. The Ca(2+) site is built by aspartate 271 and lysine 355. 3 N-linked (GlcNAc...) asparagine glycosylation sites follow: asparagine 387, asparagine 396, and asparagine 418. I-EGF domains are found at residues 456-491, 492-538, 539-575, and 576-615; these read CQKE…PHCE, CGED…PYCQ, CDNF…EYCN, and CTTS…PTCE. Asparagine 463 and asparagine 471 each carry an N-linked (GlcNAc...) asparagine glycan. Asparagine 541 is a glycosylation site (N-linked (GlcNAc...) asparagine). The N-linked (GlcNAc...) asparagine glycan is linked to asparagine 575. Disulfide bonds link cysteine 576–cysteine 599, cysteine 583–cysteine 597, cysteine 591–cysteine 602, cysteine 604–cysteine 614, cysteine 617–cysteine 620, cysteine 624–cysteine 670, cysteine 630–cysteine 649, cysteine 633–cysteine 645, and cysteine 678–cysteine 702. N-linked (GlcNAc...) asparagine glycosylation occurs at asparagine 696. Residues 710 to 730 traverse the membrane as a helical segment; that stretch reads MIMLGVSLAILLIGVVLLCIW. The segment at 731–758 is interaction with HAX1; the sequence is KLLVSFHDRKEVAKFEAERSKAKWQTGT. Residues 731 to 788 are Cytoplasmic-facing; the sequence is KLLVSFHDRKEVAKFEAERSKAKWQTGTNPLYRGSTSTFKNVTYKHRDKLKTDLSTDG.

Belongs to the integrin beta chain family. As to quaternary structure, heterodimer of an alpha and a beta subunit. Interacts with FLNB. Interacts with HAX1. ITGAV:ITGB6 interacts with FBN1. ITGAV:ITGB6 interacts with TGFB1.

It is found in the cell membrane. The protein resides in the cell junction. Its subcellular location is the focal adhesion. In terms of biological role, integrin alpha-V:beta-6 (ITGAV:ITGB6) is a receptor for fibronectin and cytotactin. It recognizes the sequence R-G-D in its ligands. ITGAV:ITGB6 acts as a receptor for fibrillin-1 (FBN1) and mediates R-G-D-dependent cell adhesion to FBN1. Integrin alpha-V:beta-6 (ITGAV:ITGB6) mediates R-G-D-dependent release of transforming growth factor beta-1 (TGF-beta-1) from regulatory Latency-associated peptide (LAP), thereby playing a key role in TGF-beta-1 activation. This Cavia porcellus (Guinea pig) protein is Integrin beta-6 (ITGB6).